We begin with the raw amino-acid sequence, 442 residues long: Ribulose bisphosphate carboxylase/oxygenase activase 1, chloroplastic (442 aa).

Residues 1–58 (MATSVSTIGAVNKTPLSLNNSVAGTSVPSTAFFGKTLKKVYGKGVSSPKVTNKSLRIV) constitute a chloroplast transit peptide. Residue 169–176 (GGKGQGKS) coordinates ATP.

Belongs to the RuBisCO activase family.

It localises to the plastid. Its subcellular location is the chloroplast stroma. Functionally, activation of RuBisCO (ribulose-1,5-bisphosphate carboxylase/oxygenase; EC 4.1.1.39) involves the ATP-dependent carboxylation of the epsilon-amino group of lysine leading to a carbamate structure. The chain is Ribulose bisphosphate carboxylase/oxygenase activase 1, chloroplastic from Nicotiana tabacum (Common tobacco).